Here is a 98-residue protein sequence, read N- to C-terminus: Histone H4-1 (98 aa).

Gly residues predominate over residues 1-14 (MGGKGGKGGKGLGK). Residues 1–20 (MGGKGGKGGKGLGKVGAKKR) form a disordered region.

Belongs to the histone H4 family. In terms of assembly, the nucleosome is a histone octamer containing two molecules each of H2A, H2B, H3 and H4 assembled in one H3-H4 heterotetramer and two H2A-H2B heterodimers. The octamer wraps approximately 147 bp of DNA.

The protein localises to the nucleus. Its subcellular location is the chromosome. Its function is as follows. Core component of nucleosome. Nucleosomes wrap and compact DNA into chromatin, limiting DNA accessibility to the cellular machineries which require DNA as a template. Histones thereby play a central role in transcription regulation, DNA repair, DNA replication and chromosomal stability. DNA accessibility is regulated via a complex set of post-translational modifications of histones, also called histone code, and nucleosome remodeling. In Blepharisma japonicum, this protein is Histone H4-1.